The primary structure comprises 314 residues: Trihelix transcription factor ASR3 (314 aa).

Residues 1-34 (MALEQLGLGVSAVDGGENSSAPSNDGGDDGVKTA) are disordered. The Myb-like domain maps to 38-104 (RWTRQEILVL…QCRKRWSNLA (67 aa)). Positions 84–91 (CKRHGVNR) match the Nuclear localization signal motif. Residues 161–165 (LSLGL) carry the EAR 1 motif. Threonine 189 bears the Phosphothreonine; by MAPK4 mark. The disordered stretch occupies residues 207-255 (CVADQGRVKEKQPEAANVEGGSTSQEERKRKRTSFGEKEEEEEEGETKK). The EAR 2 signature appears at 280–284 (LNLKL).

As to quaternary structure, homodimer. Interacts directly with MPK4. Post-translationally, phosphorylated on Thr-189 by MPK4 in response to microbe-associated molecular patterns (MAMPs, e.g. flg22, elf18, chitin, and LPS). This phosphorylation enhances DNA-binding and thus negatively regulates immune gene expression.

Its subcellular location is the nucleus. In terms of biological role, transcriptional repressor that binds DNA and plays a negative role in regulating microbe-associated molecular patterns-(MAMPs, e.g. flg22, elf18, chitin, and LPS) triggered immunity (PTI) by negatively regulating immune gene expression. The sequence is that of Trihelix transcription factor ASR3 from Arabidopsis thaliana (Mouse-ear cress).